A 927-amino-acid chain; its full sequence is Disks large homolog 1 (927 aa).

Positions 4–64 (RKQDTQRALH…FYEVTLLDNP (61 aa)) constitute an L27 domain. Phosphothreonine is present on Thr115. 3 positions are modified to phosphoserine: Ser122, Ser138, and Ser158. The segment at 162-212 (PTEAVPPSSPTVPVIPVLPVPAENTVILPTIPQANPPPVLVNTDSLETSTY) is interaction with SH3 domains. The required for interaction with MARCHF2 stretch occupies residues 224 to 546 (EITLERGNSG…QAVTIVAQYR (323 aa)). PDZ domains follow at residues 230–317 (GNSG…SEKI), 325–412 (GPKG…YMND), and 474–555 (TGLG…RFEA). The residue at position 232 (Ser232) is a Phosphoserine. Tyr399 carries the post-translational modification Phosphotyrosine. Ser568, Ser573, Ser575, Ser579, Ser598, Ser619, Ser707, Ser710, and Ser857 each carry phosphoserine. An SH3 domain is found at 581–651 (KRSLYVRALF…PSKRRVEKKE (71 aa)). In terms of domain architecture, Guanylate kinase-like spans 683 to 858 (RKFPFYKNKD…ISIFIKPKSM (176 aa)). The tract at residues 691-719 (KDQSEQETSDADQHITSNASDSESSYRGQ) is disordered. Over residues 704–717 (HITSNASDSESSYR) the composition is skewed to polar residues.

This sequence belongs to the MAGUK family. In terms of assembly, homotetramer. Interacts (via guanylate kinase-like domain) with DLGAP1, DLGAP2, DLGAP3, DLGAP4 and MAP1A. Interacts (via guanylate kinase-like domain) with KIF13B. May interact with HTR2A. Interacts (via PDZ domains) with GRIA1. Interacts (via PDZ domains) with GRIN2A. Interacts (via PDZ domains) with KCND2 and KCND3. Interacts (via PDZ domains) with KCNA1, KCNA2, KCNA3 and KCNA4. Interacts (via PDZ domains) with ADGRA3. Interacts with KCNF1. Interacts with CAMK2. Interacts with cytoskeleton-associated protein EPB41. Interacts with cytoskeleton-associated protein EZR. Found in a complex with KCNA5 and CAV3. Found in a complex with APC and CTNNB1. Interacts (via PDZ domains) with APC. Interacts with CDH1 through binding to PIK3R1. Forms multiprotein complexes with CASK, LIN7A, LIN7B, LIN7C, APBA1, and KCNJ12. Interacts with TOPK. Forms a tripartite complex composed of DLG1, MPP7 and LIN7 (LIN7A or LIN7C). May interact with TJAP1. Interacts with PTEN. Interacts with FRMPD4 (via C-terminus). Interacts with LRFN1, LRFN2 and LRFN4. Interacts with SFPQ. Interacts (via PDZ domains) with ADGRA2 (via PDZ-binding motif). Interacts with ADAM10; this interaction recruits ADAM10 to the cell membrane during long-term depression in hippocampal neurons. Interacts with DGKI (via PDZ-binding motif). Interacts (via PDZ domains) with MARCHF2 (via PDZ domain); the interaction leads to DLG1 ubiqtuitination and degradation. Interacts (via N-terminus) with MPP3; this interaction connects CADM1 with DLG1 and links CADM1 with the regulatory subunit of phosphoinositide-3-kinase (PI3K) by forming a multiprotein complex and participates in cell spreading. Phosphorylated by MAPK12. Phosphorylation of Ser-232 regulates association with GRIN2A. Post-translationally, ubiquitinated; by MARCHF2 which results in its degradation.

The protein resides in the cell membrane. It localises to the basolateral cell membrane. The protein localises to the endoplasmic reticulum membrane. Its subcellular location is the postsynaptic density. It is found in the synapse. The protein resides in the sarcolemma. It localises to the apical cell membrane. The protein localises to the cell junction. Its subcellular location is the cytoplasm. Its function is as follows. Essential multidomain scaffolding protein required for normal development. Recruits channels, receptors and signaling molecules to discrete plasma membrane domains in polarized cells. Promotes epithelial cell layer barrier function via maintaining cell-cell adhesion. May also play a role in adherens junction assembly, signal transduction, cell proliferation, synaptogenesis and lymphocyte activation. Regulates the excitability of cardiac myocytes by modulating the functional expression of Kv4 channels. Functional regulator of Kv1.5 channel. During long-term depression in hippocampal neurons, it recruits ADAM10 to the plasma membrane. This Canis lupus familiaris (Dog) protein is Disks large homolog 1 (DLG1).